Reading from the N-terminus, the 152-residue chain is Histone deacetylase complex subunit SAP18 (152 aa).

The interval 1 to 38 (MAEAARRQGGGRPLPPPPRGVNQQPPRPKPEPVDREKT) is disordered. The span at 28-38 (PKPEPVDREKT) shows a compositional bias: basic and acidic residues.

This sequence belongs to the SAP18 family. Interacts with SIN3, ERF3, ERF4 and HDA19. Ubiquitous, with low level in flowers.

Functionally, links the histone deacetylase complex to transcriptional repressors bound to chromatin. Involved in the tethering of the SIN3 complex to core histone proteins. This is Histone deacetylase complex subunit SAP18 from Arabidopsis thaliana (Mouse-ear cress).